Consider the following 186-residue polypeptide: Ion-translocating oxidoreductase complex subunit B (186 aa).

Positions 1-23 are hydrophobic; that stretch reads MLTPILALTALALIAGALLGFAA. Residues 29 to 88 form the 4Fe-4S domain; sequence EGNPIADQVDAVLPQTQCGQCGFGGCRPYAEAIAAGEAEINRCPPGGQDTVQTLADLLGV. Positions 46, 49, 54, 71, 114, 117, 120, 124, 144, 147, 150, and 154 each coordinate [4Fe-4S] cluster. 2 consecutive 4Fe-4S ferredoxin-type domains span residues 105 to 134 and 135 to 164; these read QVAW…GAAK and QMHT…MVPV.

This sequence belongs to the 4Fe4S bacterial-type ferredoxin family. RnfB subfamily. The complex is composed of six subunits: RnfA, RnfB, RnfC, RnfD, RnfE and RnfG. [4Fe-4S] cluster serves as cofactor.

Its subcellular location is the cell inner membrane. Functionally, part of a membrane-bound complex that couples electron transfer with translocation of ions across the membrane. The chain is Ion-translocating oxidoreductase complex subunit B from Alkalilimnicola ehrlichii (strain ATCC BAA-1101 / DSM 17681 / MLHE-1).